We begin with the raw amino-acid sequence, 150 residues long: Testis-expressed protein 22 (150 aa).

Residues 1-23 (MDSRKLSPRGKKLESHLSQEHRR) show a composition bias toward basic and acidic residues. Positions 1–26 (MDSRKLSPRGKKLESHLSQEHRRPPL) are disordered.

The protein localises to the cytoplasm. It is found in the cytoplasmic vesicle. Its subcellular location is the secretory vesicle. It localises to the acrosome. The sequence is that of Testis-expressed protein 22 (TEX22) from Homo sapiens (Human).